Reading from the N-terminus, the 257-residue chain is NAD-capped RNA hydrolase NudC (257 aa).

Residues Lys25 and Arg69 each coordinate substrate. Residues Cys98 and Cys101 each coordinate Zn(2+). Glu111 is a binding site for substrate. Residues Cys116 and Cys119 each contribute to the Zn(2+) site. Residue Tyr124 coordinates substrate. Residues Pro125 to Thr248 form the Nudix hydrolase domain. The a divalent metal cation site is built by Ala158, Glu174, and Glu178. The Nudix box signature appears at Gly159–Gly180. Substrate is bound at residue Gln192–Ser199. Glu219 serves as a coordination point for a divalent metal cation. Residue Ala241 coordinates substrate.

It belongs to the Nudix hydrolase family. NudC subfamily. Homodimer. Mg(2+) is required as a cofactor. Requires Mn(2+) as cofactor. The cofactor is Zn(2+).

The catalysed reaction is a 5'-end NAD(+)-phospho-ribonucleoside in mRNA + H2O = a 5'-end phospho-adenosine-phospho-ribonucleoside in mRNA + beta-nicotinamide D-ribonucleotide + 2 H(+). The enzyme catalyses NAD(+) + H2O = beta-nicotinamide D-ribonucleotide + AMP + 2 H(+). It catalyses the reaction NADH + H2O = reduced beta-nicotinamide D-ribonucleotide + AMP + 2 H(+). MRNA decapping enzyme that specifically removes the nicotinamide adenine dinucleotide (NAD) cap from a subset of mRNAs by hydrolyzing the diphosphate linkage to produce nicotinamide mononucleotide (NMN) and 5' monophosphate mRNA. The NAD-cap is present at the 5'-end of some mRNAs and stabilizes RNA against 5'-processing. Has preference for mRNAs with a 5'-end purine. Catalyzes the hydrolysis of a broad range of dinucleotide pyrophosphates. In Escherichia coli O127:H6 (strain E2348/69 / EPEC), this protein is NAD-capped RNA hydrolase NudC.